A 242-amino-acid chain; its full sequence is 7-cyano-7-deazaguanine synthase (242 aa).

14-24 (FSGGQDSATCL) lines the ATP pocket. C202, C217, C220, and C223 together coordinate Zn(2+).

Belongs to the QueC family. Zn(2+) is required as a cofactor.

The enzyme catalyses 7-carboxy-7-deazaguanine + NH4(+) + ATP = 7-cyano-7-deazaguanine + ADP + phosphate + H2O + H(+). The protein operates within purine metabolism; 7-cyano-7-deazaguanine biosynthesis. In terms of biological role, catalyzes the ATP-dependent conversion of 7-carboxy-7-deazaguanine (CDG) to 7-cyano-7-deazaguanine (preQ(0)). The chain is 7-cyano-7-deazaguanine synthase from Rhodopseudomonas palustris (strain BisA53).